The sequence spans 406 residues: ATP phosphoribosyltransferase regulatory subunit (406 aa).

Belongs to the class-II aminoacyl-tRNA synthetase family. HisZ subfamily. In terms of assembly, heteromultimer composed of HisG and HisZ subunits.

The protein localises to the cytoplasm. It participates in amino-acid biosynthesis; L-histidine biosynthesis; L-histidine from 5-phospho-alpha-D-ribose 1-diphosphate: step 1/9. Its function is as follows. Required for the first step of histidine biosynthesis. May allow the feedback regulation of ATP phosphoribosyltransferase activity by histidine. The chain is ATP phosphoribosyltransferase regulatory subunit from Methylococcus capsulatus (strain ATCC 33009 / NCIMB 11132 / Bath).